We begin with the raw amino-acid sequence, 194 residues long: Phosphoheptose isomerase (194 aa).

The 158-residue stretch at 37–194 (IANSFKQGGK…LIEFEMAKTA (158 aa)) folds into the SIS domain. 52 to 54 (NGG) serves as a coordination point for substrate. The Zn(2+) site is built by H61 and E65. Substrate is bound by residues E65, 93–94 (ND), 119–121 (STS), S124, and Q172. Residues Q172 and H180 each coordinate Zn(2+).

This sequence belongs to the SIS family. GmhA subfamily. As to quaternary structure, homotetramer. Requires Zn(2+) as cofactor.

The protein resides in the cytoplasm. The enzyme catalyses 2 D-sedoheptulose 7-phosphate = D-glycero-alpha-D-manno-heptose 7-phosphate + D-glycero-beta-D-manno-heptose 7-phosphate. It functions in the pathway carbohydrate biosynthesis; D-glycero-D-manno-heptose 7-phosphate biosynthesis; D-glycero-alpha-D-manno-heptose 7-phosphate and D-glycero-beta-D-manno-heptose 7-phosphate from sedoheptulose 7-phosphate: step 1/1. The protein operates within bacterial outer membrane biogenesis; LOS core biosynthesis. In terms of biological role, catalyzes the isomerization of sedoheptulose 7-phosphate in D-glycero-D-manno-heptose 7-phosphate. The sequence is that of Phosphoheptose isomerase from Haemophilus ducreyi (strain 35000HP / ATCC 700724).